The sequence spans 277 residues: Large ribosomal subunit protein uL2 (277 aa).

The disordered stretch occupies residues 222–277 (GVAMNPVDHPHGGGEGRTSGGRHPVSPWGKPTKGKRTRSNKATDKFIMRSRHQRKK).

It belongs to the universal ribosomal protein uL2 family. As to quaternary structure, part of the 50S ribosomal subunit. Forms a bridge to the 30S subunit in the 70S ribosome.

One of the primary rRNA binding proteins. Required for association of the 30S and 50S subunits to form the 70S ribosome, for tRNA binding and peptide bond formation. It has been suggested to have peptidyltransferase activity; this is somewhat controversial. Makes several contacts with the 16S rRNA in the 70S ribosome. This chain is Large ribosomal subunit protein uL2, found in Bartonella bacilliformis (strain ATCC 35685 / KC583 / Herrer 020/F12,63).